Reading from the N-terminus, the 192-residue chain is Density-regulated protein homolog (192 aa).

Positions 62–116 (GLEISDEPAADGDEKKKQKRGGKGSKTGAAAAQAAASGGKKKGGGPQKVTLQREP) are disordered. The span at 87–99 (KTGAAAAQAAASG) shows a compositional bias: low complexity. In terms of domain architecture, SUI1 spans 117 to 176 (RGKKSVTVIKGLATFDIDLKVASKLFAQKFACGSSVTGADEIVIQGDVKDDLLDLIPEKW).

Belongs to the DENR family.

The sequence is that of Density-regulated protein homolog from Caenorhabditis elegans.